The sequence spans 215 residues: UPF0502 protein YceH (215 aa).

Residue Lys80 is modified to N6-acetyllysine.

Belongs to the UPF0502 family.

This chain is UPF0502 protein YceH, found in Shigella boydii serotype 4 (strain Sb227).